A 124-amino-acid polypeptide reads, in one-letter code: Fluoride-specific ion channel FluC (124 aa).

The next 4 helical transmembrane spans lie at 2 to 22 (LNIA…RWLI), 35 to 55 (TGTL…IAWF), 71 to 91 (TGFC…VALF), and 100 to 120 (LGTM…AFWL). Residues Gly75 and Thr78 each contribute to the Na(+) site.

The protein belongs to the fluoride channel Fluc/FEX (TC 1.A.43) family.

It localises to the cell inner membrane. The enzyme catalyses fluoride(in) = fluoride(out). Its activity is regulated as follows. Na(+) is not transported, but it plays an essential structural role and its presence is essential for fluoride channel function. Functionally, fluoride-specific ion channel. Important for reducing fluoride concentration in the cell, thus reducing its toxicity. The sequence is that of Fluoride-specific ion channel FluC from Proteus mirabilis (strain HI4320).